The following is a 146-amino-acid chain: Large ribosomal subunit protein uL15 (146 aa).

A disordered region spans residues 1–54 (MKLHELKPAAGSRKAPKRVGRGTGSGLGRNAGKGEKGQNARSGGGVRPGFEGGQ). Composition is skewed to gly residues over residues 21–31 (RGTGSGLGRNA) and 42–52 (SGGGVRPGFEG).

The protein belongs to the universal ribosomal protein uL15 family. In terms of assembly, part of the 50S ribosomal subunit.

In terms of biological role, binds to the 23S rRNA. In Clostridium acetobutylicum (strain ATCC 824 / DSM 792 / JCM 1419 / IAM 19013 / LMG 5710 / NBRC 13948 / NRRL B-527 / VKM B-1787 / 2291 / W), this protein is Large ribosomal subunit protein uL15.